Here is a 445-residue protein sequence, read N- to C-terminus: N-succinylarginine dihydrolase (445 aa).

Substrate contacts are provided by residues 19–28 (AGLSYGNVAS), Asn110, and 137–138 (HR). Glu174 is an active-site residue. Arg214 is a substrate binding site. The active site involves His250. Substrate is bound by residues Asp252 and Asn363. Residue Cys369 is the Nucleophile of the active site.

Belongs to the succinylarginine dihydrolase family. In terms of assembly, homodimer.

The catalysed reaction is N(2)-succinyl-L-arginine + 2 H2O + 2 H(+) = N(2)-succinyl-L-ornithine + 2 NH4(+) + CO2. The protein operates within amino-acid degradation; L-arginine degradation via AST pathway; L-glutamate and succinate from L-arginine: step 2/5. In terms of biological role, catalyzes the hydrolysis of N(2)-succinylarginine into N(2)-succinylornithine, ammonia and CO(2). The sequence is that of N-succinylarginine dihydrolase from Shewanella loihica (strain ATCC BAA-1088 / PV-4).